The chain runs to 669 residues: Acetyl-coenzyme A synthetase (669 aa).

CoA contacts are provided by residues 211–214 (RGGK) and Thr329. Residues 404 to 406 (GEP), 428 to 433 (DTYWQT), Asp519, and Arg534 each bind ATP. Ser542 lines the CoA pocket. Residue Arg545 participates in ATP binding. A CoA-binding site is contributed by Arg602.

The protein belongs to the ATP-dependent AMP-binding enzyme family.

The catalysed reaction is acetate + ATP + CoA = acetyl-CoA + AMP + diphosphate. It functions in the pathway ketone degradation; acetoin degradation. It participates in antibiotic biosynthesis; penicillin biosynthesis. This chain is Acetyl-coenzyme A synthetase (facA), found in Penicillium chrysogenum (Penicillium notatum).